Consider the following 215-residue polypeptide: Ribonuclease T (215 aa).

An Exonuclease domain is found at 20–194 (VVIDVETAGF…YDTMQTAKLF (175 aa)). Mg(2+) contacts are provided by Asp23, Glu25, His181, and Asp186. His181 functions as the Proton donor/acceptor in the catalytic mechanism.

Belongs to the RNase T family. As to quaternary structure, homodimer. Mg(2+) serves as cofactor.

Trims short 3' overhangs of a variety of RNA species, leaving a one or two nucleotide 3' overhang. Responsible for the end-turnover of tRNA: specifically removes the terminal AMP residue from uncharged tRNA (tRNA-C-C-A). Also appears to be involved in tRNA biosynthesis. This chain is Ribonuclease T, found in Yersinia enterocolitica serotype O:8 / biotype 1B (strain NCTC 13174 / 8081).